The following is a 217-amino-acid chain: Outer-membrane lipoprotein LolB (217 aa).

Positions 1 to 20 are cleaved as a signal peptide; it reads MSKALRTLALSGLVLVGLSA. Cys21 is lipidated: N-palmitoyl cysteine. Cys21 carries S-diacylglycerol cysteine lipidation.

This sequence belongs to the LolB family. As to quaternary structure, monomer.

It is found in the cell outer membrane. Its function is as follows. Plays a critical role in the incorporation of lipoproteins in the outer membrane after they are released by the LolA protein. The protein is Outer-membrane lipoprotein LolB of Xanthomonas oryzae pv. oryzae (strain MAFF 311018).